We begin with the raw amino-acid sequence, 246 residues long: Orotidine 5'-phosphate decarboxylase (246 aa).

Substrate-binding positions include Asp22, Lys44, 71-80 (DLKYHDIPHT), Thr130, Arg191, Gln201, Gly221, and Arg222. Catalysis depends on Lys73, which acts as the Proton donor.

This sequence belongs to the OMP decarboxylase family. Type 1 subfamily. In terms of assembly, homodimer.

The catalysed reaction is orotidine 5'-phosphate + H(+) = UMP + CO2. Its pathway is pyrimidine metabolism; UMP biosynthesis via de novo pathway; UMP from orotate: step 2/2. In terms of biological role, catalyzes the decarboxylation of orotidine 5'-monophosphate (OMP) to uridine 5'-monophosphate (UMP). The chain is Orotidine 5'-phosphate decarboxylase from Neisseria meningitidis serogroup A / serotype 4A (strain DSM 15465 / Z2491).